Here is a 554-residue protein sequence, read N- to C-terminus: Urocanate hydratase (554 aa).

NAD(+) contacts are provided by residues 51 to 52 (GG), Gln-129, 175 to 177 (GMG), Glu-195, 241 to 242 (NA), 262 to 266 (QTSAH), 272 to 273 (YL), and Tyr-321. Cys-409 is an active-site residue. Position 491 (Gly-491) interacts with NAD(+).

The protein belongs to the urocanase family. It depends on NAD(+) as a cofactor.

It is found in the cytoplasm. It carries out the reaction 4-imidazolone-5-propanoate = trans-urocanate + H2O. Its pathway is amino-acid degradation; L-histidine degradation into L-glutamate; N-formimidoyl-L-glutamate from L-histidine: step 2/3. Catalyzes the conversion of urocanate to 4-imidazolone-5-propionate. This chain is Urocanate hydratase, found in Methylobacterium nodulans (strain LMG 21967 / CNCM I-2342 / ORS 2060).